Here is an 81-residue protein sequence, read N- to C-terminus: Acyl carrier protein (81 aa).

Residues 3-78 (QEIFEKVKSI…AAVDYIEKEQ (76 aa)) form the Carrier domain. Residue S38 is modified to O-(pantetheine 4'-phosphoryl)serine.

It belongs to the acyl carrier protein (ACP) family. Post-translationally, 4'-phosphopantetheine is transferred from CoA to a specific serine of apo-ACP by AcpS. This modification is essential for activity because fatty acids are bound in thioester linkage to the sulfhydryl of the prosthetic group.

Its subcellular location is the cytoplasm. Its pathway is lipid metabolism; fatty acid biosynthesis. Functionally, carrier of the growing fatty acid chain in fatty acid biosynthesis. The sequence is that of Acyl carrier protein from Crocosphaera subtropica (strain ATCC 51142 / BH68) (Cyanothece sp. (strain ATCC 51142)).